The following is a 385-amino-acid chain: Trans-enoyl reductase poxH (385 aa).

64–67 (QPYS) serves as a coordination point for NADP(+). 156–163 (PDPAAPPI) lines the substrate pocket. NADP(+)-binding positions include 199–202 (STSV), 223–226 (SGTD), Tyr241, and 289–290 (LG). 309 to 313 (HMAPL) contributes to the substrate binding site. 372-373 (KR) serves as a coordination point for NADP(+).

It belongs to the zinc-containing alcohol dehydrogenase family. Monomer.

It functions in the pathway secondary metabolite biosynthesis. Trans-enoyl reductase; part of the gene cluster that mediates the biosynthesis of oxaleimides, cytotoxic compounds containing an unusual disubstituted succinimide moiety. The first step of the pathway is provided by the HR-PKS poxF that serves in a new mode of collaborative biosynthesis with the PKS-NRPS poxE, by providing the olefin containing amino acid substrate via the synthesis of an ACP-bound dec-4-enoate. The cytochrome P450 monooxygenase poxM-catalyzed oxidation at the alpha-position creates the enzyme-bound 2-hydroxydec-4-enoyl-ACP thioester, which may be prone to spontaneous hydrolysis to yield 2-hydroxydec-4-enoic acid due to increased electrophilicity of the carbonyl. 2-hydroxydec-4-enoic acid can then be further oxidized by poxM to yield the alpha-ketoacid 2-oxodec-4-enoicacid, which is reductively aminated by the aminotransferase poxL to yield (S,E)-2-aminodec-4-enoic acid. The Hybrid PKS-NRPS synthetase poxE then performs condensation between the octaketide product of its PKS modules and the amino group of (S,E)-2-aminodec-4-enoic acid which is activated and incorporated by the adenylation domain. The resulting aminoacyl product can be cyclized by the Diels-Alderase PoxQ and reductively released by the reductive (R) domain of poxE to yield an aldehyde intermediate. The released aldehyde is then substrate for a Knoevenagel condensation by the hydrolyase poxO followed by an oxidation at the 5-position of the pyrrolidone ring. The presence of the olefin from the amino acid building block allows for migration of the substituted allyl group to occur. This allylic transposition reaction takes place in a conjugate addition, semipinacol-like fashion to yield a succinimide intermediate. Iterative two-electron oxidations of the C7 methyl of the succinimide intermediate to the carboxylic acid can be catalyzed by one of two remaining cytochrome P450 monooxygenasess poxC or poxD to yield oxaleimide A. Subsequent oxidation yields the maleimide scaffold oxaleimide I. Both oxaleimide A and oxaleimide I can undergo oxidative modifications in the decalin ring to yield the series of products oxaleimides B to H. This Penicillium oxalicum protein is Trans-enoyl reductase poxH.